We begin with the raw amino-acid sequence, 467 residues long: Ankyrin repeat and SOCS box protein 10 (467 aa).

ANK repeat units lie at residues 115–144 (ELTT…RPDS), 147–176 (GGRT…DPNI), 180–209 (DGKR…RVDG), 214–243 (EEET…CPDA), 247–289 (EGWT…DADA), 293–322 (DKQR…SANT), and 326–361 (GGHT…AVRV). The 53-residue stretch at 412–464 (YSSLFALVRQPRSLQHLSRCALRSHLEGSLPQALPRLPLPPRLLRYLQLDFEG) folds into the SOCS box domain.

It belongs to the ankyrin SOCS box (ASB) family. As to expression, expressed in the eye. The highest expression is observed in the iris, with moderate levels in the trabecular meshwork (TM), the lamina, and the optic nerve; slightly lower levels in the ciliary body, retina, and choroid; and very low levels in the lens.

The protein resides in the cytoplasm. The protein localises to the nucleus. It functions in the pathway protein modification; protein ubiquitination. May be a substrate-recognition component of a SCF-like ECS (Elongin-Cullin-SOCS-box protein) E3 ubiquitin-protein ligase complex which mediates the ubiquitination and subsequent proteasomal degradation of target proteins. This Homo sapiens (Human) protein is Ankyrin repeat and SOCS box protein 10 (ASB10).